Here is an 89-residue protein sequence, read N- to C-terminus: Small ribosomal subunit protein uS15 (89 aa).

Belongs to the universal ribosomal protein uS15 family. As to quaternary structure, part of the 30S ribosomal subunit. Forms a bridge to the 50S subunit in the 70S ribosome, contacting the 23S rRNA.

Its function is as follows. One of the primary rRNA binding proteins, it binds directly to 16S rRNA where it helps nucleate assembly of the platform of the 30S subunit by binding and bridging several RNA helices of the 16S rRNA. In terms of biological role, forms an intersubunit bridge (bridge B4) with the 23S rRNA of the 50S subunit in the ribosome. This chain is Small ribosomal subunit protein uS15, found in Desulforudis audaxviator (strain MP104C).